The following is a 64-amino-acid chain: Large ribosomal subunit protein bL35 (64 aa).

This sequence belongs to the bacterial ribosomal protein bL35 family.

The chain is Large ribosomal subunit protein bL35 from Shewanella loihica (strain ATCC BAA-1088 / PV-4).